Reading from the N-terminus, the 61-residue chain is Small ribosomal subunit protein uS14 (61 aa).

C24, C27, C40, and C43 together coordinate Zn(2+).

The protein belongs to the universal ribosomal protein uS14 family. Zinc-binding uS14 subfamily. As to quaternary structure, part of the 30S ribosomal subunit. Contacts proteins S3 and S10. Zn(2+) serves as cofactor.

Binds 16S rRNA, required for the assembly of 30S particles and may also be responsible for determining the conformation of the 16S rRNA at the A site. The chain is Small ribosomal subunit protein uS14 from Rhodopirellula baltica (strain DSM 10527 / NCIMB 13988 / SH1).